A 100-amino-acid polypeptide reads, in one-letter code: Integration host factor subunit alpha (100 aa).

The interval 50-70 (GNFQLRDKPQRPGRNPKTGEE) is disordered.

The protein belongs to the bacterial histone-like protein family. In terms of assembly, heterodimer of an alpha and a beta chain.

Functionally, this protein is one of the two subunits of integration host factor, a specific DNA-binding protein that functions in genetic recombination as well as in transcriptional and translational control. The protein is Integration host factor subunit alpha of Chromobacterium violaceum (strain ATCC 12472 / DSM 30191 / JCM 1249 / CCUG 213 / NBRC 12614 / NCIMB 9131 / NCTC 9757 / MK).